We begin with the raw amino-acid sequence, 797 residues long: MKTRGFSFPRQRQVLFLFLFWGVSLAGSGFGRYSVTEETEKGSFVVNLAKDLGLAEGKLAARGTRVVSDDNKQYLLLDSHTGNLLTNEKLDREKLCGPKEPCMLYFQILMDDPFQIYRAELRVRDINDHSPVFRHKEMVLKISENTAEGTAFRLERAQDPDEGHNSIQNYTISPNSFFHIKISGSDEGMIYPELVLDKALDREEQEELSLTLTALDGGSPSRSGTSTIRIVVLDVNDNAPQFAQALYETQAPENSPVGSRIVKVSAGDADSGVNAEVSYSFFDASEDILTTFQINPSSGEIFLRELLDYELVNSYKRNIQAMDGGGLSARCTVLIKVLDSNDNPPELIISSLSNSVAENSPGIVLAVFKIKDRDSGENGKTICYVQDNLPFFLKPSVDNFYILMTEGALDRESKAEYNITITVTDLGTPRLKTEHSITLQVSDVNDNAPAFTQTSYTLFVRENNSPALHVGSVSPTDGDSGTNAQVTYSLLPPQDPHLPLASLVSINADNGHLFALRSLDYEALQAFEFRVGATDRGSPALSSEALVRVLVLDANDNSPFVLYPLQNGSAPCTELVPRAAEPGYLVTKVVAVDGDSGQNAWLSYQLLKATEPGLFGVWAHNGEVRTARLLSERDAAKHRLVVLVKDNGEPPRSATATLHVLLVDGFSQPYLPLPEAAPAQAQADSLTVYLVVALASVSSLFLLSVLLFVAVRLCRRSRAASVGRCSVPEGPFPGHLVDVSGTGTLFQSYQYEVCLTGGSETGEFKFLKPITRHLPPHRVGKEIEENSTLHNSFGFNY.

The N-terminal stretch at 1–26 is a signal peptide; the sequence is MKTRGFSFPRQRQVLFLFLFWGVSLA. At 27–690 the chain is on the extracellular side; sequence GSGFGRYSVT…AQADSLTVYL (664 aa). 5 consecutive Cadherin domains span residues 35–133, 138–242, 247–347, 352–451, and 456–561; these read VTEE…SPVF, MVLK…APQF, YETQ…PPEL, LSNS…APAF, and YTLF…SPFV. An N-linked (GlcNAc...) asparagine glycan is attached at N169. N-linked (GlcNAc...) asparagine glycosylation occurs at N418. N-linked (GlcNAc...) asparagine glycosylation occurs at N567. A Cadherin 6 domain is found at 568 to 671; it reads GSAPCTELVP…LVDGFSQPYL (104 aa). The chain crosses the membrane as a helical span at residues 691–711; the sequence is VVALASVSSLFLLSVLLFVAV. Residues 712–797 lie on the Cytoplasmic side of the membrane; the sequence is RLCRRSRAAS…TLHNSFGFNY (86 aa).

Its subcellular location is the cell membrane. Its function is as follows. Potential calcium-dependent cell-adhesion protein. May be involved in the establishment and maintenance of specific neuronal connections in the brain. The chain is Protocadherin beta-9 (PCDHB9) from Pan troglodytes (Chimpanzee).